A 317-amino-acid chain; its full sequence is MSADVPVTVAAVRAVARDVLALELRHANGQPLPGASAGAHIDLALPNGLVRQYSLVNATGQATMDCYQVAVGWDANSRGGSVWIHEKLKVGQALRVSAPRNLFEMAPEHRRVLLLAGGIGVTPIYAMAQACAQQGVDVELWASARSAPRLAYLEELKALLGQRLHLHADDEQGGPMNLTERLATQRWDAVYACGPAPMLDALTAATAHWAPGSVRMERFKGAEQPASERQPFELVLQRAGLSTTVDAHESVLDAMERVGVDFPWSCREGICGTCEAPVLEGEVQHLDYVLSPEERAEQRRMMVCVSRCGGGRLVLDI.

Residues Asp-4–Ala-106 enclose the FAD-binding FR-type domain. NAD(+) is bound at residue Arg-110–Lys-220. One can recognise a 2Fe-2S ferredoxin-type domain in the interval Phe-232–Ile-317. [2Fe-2S] cluster is bound by residues Cys-266, Cys-271, and Cys-274.

In terms of assembly, monomer. Part of the p-toluenesulfonate methyl-monooxygenase complex TsaBM, comprising the reductase TsaB and the oxygenase TsaM. FMN serves as cofactor.

Its function is as follows. Involved in the toluene-4-sulfonate degradation pathway. This Comamonas testosteroni (Pseudomonas testosteroni) protein is Putative toluene-4-sulfonate monooxygenase system reductase subunit TsaB2 (tsaB2).